Reading from the N-terminus, the 173-residue chain is FMN reductase (NADH) RutF 2 (173 aa).

The protein belongs to the non-flavoprotein flavin reductase family. RutF subfamily.

The enzyme catalyses FMNH2 + NAD(+) = FMN + NADH + 2 H(+). Its function is as follows. Catalyzes the reduction of FMN to FMNH2 which is used to reduce pyrimidine by RutA via the Rut pathway. The sequence is that of FMN reductase (NADH) RutF 2 from Rhizobium rhizogenes (strain K84 / ATCC BAA-868) (Agrobacterium radiobacter).